A 158-amino-acid chain; its full sequence is Transcription elongation factor GreB (158 aa).

Belongs to the GreA/GreB family. GreB subfamily.

Its function is as follows. Necessary for efficient RNA polymerase transcription elongation past template-encoded arresting sites. The arresting sites in DNA have the property of trapping a certain fraction of elongating RNA polymerases that pass through, resulting in locked ternary complexes. Cleavage of the nascent transcript by cleavage factors such as GreA or GreB allows the resumption of elongation from the new 3'terminus. GreB releases sequences of up to 9 nucleotides in length. The sequence is that of Transcription elongation factor GreB from Escherichia coli (strain K12).